The primary structure comprises 144 residues: MKKVEIFTDGACKGNPGPGGWGVLLRMGKHEKELSGGEPETTNNRMELRAAIEGLNALIEPCEVELYTDSKYVVDGITKWVHGWKKRGWVNASKKPVRNDDLWHDLIEAELRHKVTWHWVKGHNGHAENERADRLASEAADLQS.

The RNase H type-1 domain maps to 1-141 (MKKVEIFTDG…ADRLASEAAD (141 aa)). 4 residues coordinate Mg(2+): Asp9, Glu47, Asp69, and Asp133.

The protein belongs to the RNase H family. In terms of assembly, monomer. It depends on Mg(2+) as a cofactor.

It localises to the cytoplasm. The catalysed reaction is Endonucleolytic cleavage to 5'-phosphomonoester.. Functionally, endonuclease that specifically degrades the RNA of RNA-DNA hybrids. The protein is Ribonuclease H of Erythrobacter litoralis (strain HTCC2594).